The following is a 482-amino-acid chain: tRNA sulfurtransferase (482 aa).

A THUMP domain is found at Asp61–Arg165. Residues Leu183–Ile184, Lys265, Gly287, and Gln296 contribute to the ATP site. Cys344 and Cys456 are disulfide-bonded. The 79-residue stretch at Leu404–Pro482 folds into the Rhodanese domain. Cys456 serves as the catalytic Cysteine persulfide intermediate.

The protein belongs to the ThiI family.

The protein resides in the cytoplasm. It catalyses the reaction [ThiI sulfur-carrier protein]-S-sulfanyl-L-cysteine + a uridine in tRNA + 2 reduced [2Fe-2S]-[ferredoxin] + ATP + H(+) = [ThiI sulfur-carrier protein]-L-cysteine + a 4-thiouridine in tRNA + 2 oxidized [2Fe-2S]-[ferredoxin] + AMP + diphosphate. The catalysed reaction is [ThiS sulfur-carrier protein]-C-terminal Gly-Gly-AMP + S-sulfanyl-L-cysteinyl-[cysteine desulfurase] + AH2 = [ThiS sulfur-carrier protein]-C-terminal-Gly-aminoethanethioate + L-cysteinyl-[cysteine desulfurase] + A + AMP + 2 H(+). It functions in the pathway cofactor biosynthesis; thiamine diphosphate biosynthesis. Functionally, catalyzes the ATP-dependent transfer of a sulfur to tRNA to produce 4-thiouridine in position 8 of tRNAs, which functions as a near-UV photosensor. Also catalyzes the transfer of sulfur to the sulfur carrier protein ThiS, forming ThiS-thiocarboxylate. This is a step in the synthesis of thiazole, in the thiamine biosynthesis pathway. The sulfur is donated as persulfide by IscS. This chain is tRNA sulfurtransferase, found in Aliivibrio fischeri (strain MJ11) (Vibrio fischeri).